The chain runs to 204 residues: Superoxide dismutase [Mn] (204 aa).

Mn(2+) contacts are provided by His-29, His-84, Asp-167, and His-171.

Belongs to the iron/manganese superoxide dismutase family. Homotetramer. Mn(2+) serves as cofactor.

It catalyses the reaction 2 superoxide + 2 H(+) = H2O2 + O2. Destroys superoxide anion radicals which are normally produced within the cells and which are toxic to biological systems. This is Superoxide dismutase [Mn] (sodA) from Thermus aquaticus.